The sequence spans 82 residues: DNA-directed RNA polymerase subunit Rpo5 (82 aa).

Belongs to the archaeal Rpo5/eukaryotic RPB5 RNA polymerase subunit family. In terms of assembly, part of the RNA polymerase complex.

Its subcellular location is the cytoplasm. The enzyme catalyses RNA(n) + a ribonucleoside 5'-triphosphate = RNA(n+1) + diphosphate. Its function is as follows. DNA-dependent RNA polymerase (RNAP) catalyzes the transcription of DNA into RNA using the four ribonucleoside triphosphates as substrates. The sequence is that of DNA-directed RNA polymerase subunit Rpo5 from Thermococcus onnurineus (strain NA1).